Reading from the N-terminus, the 245-residue chain is Probable transcriptional regulatory protein SUN_1622 (245 aa).

This sequence belongs to the TACO1 family.

The protein resides in the cytoplasm. This chain is Probable transcriptional regulatory protein SUN_1622, found in Sulfurovum sp. (strain NBC37-1).